Consider the following 497-residue polypeptide: Lysine--tRNA ligase (497 aa).

Mg(2+) contacts are provided by E409 and E416.

The protein belongs to the class-II aminoacyl-tRNA synthetase family. In terms of assembly, homodimer. Mg(2+) is required as a cofactor.

Its subcellular location is the cytoplasm. It carries out the reaction tRNA(Lys) + L-lysine + ATP = L-lysyl-tRNA(Lys) + AMP + diphosphate. This chain is Lysine--tRNA ligase, found in Streptococcus pyogenes serotype M3 (strain ATCC BAA-595 / MGAS315).